We begin with the raw amino-acid sequence, 130 residues long: WAP four-disulfide core domain protein 3 (130 aa).

The N-terminal stretch at 1–16 (MKALLALGFLASWVAA) is a signal peptide. WAP domains are found at residues 17 to 61 (GEHA…RGDI) and 62 to 106 (EGGR…IPGL). Intrachain disulfides connect Cys-25–Cys-49, Cys-32–Cys-53, Cys-36–Cys-48, Cys-42–Cys-57, Cys-69–Cys-94, Cys-77–Cys-98, Cys-81–Cys-93, and Cys-87–Cys-102. The N-linked (GlcNAc...) asparagine glycan is linked to Asn-116.

Its subcellular location is the secreted. The chain is WAP four-disulfide core domain protein 3 (Wfdc3) from Mus musculus (Mouse).